Here is a 429-residue protein sequence, read N- to C-terminus: Adenylosuccinate synthetase (429 aa).

GTP-binding positions include 12–18 and 40–42; these read GDEGKGK and GHT. The Proton acceptor role is filled by D13. Positions 13 and 40 each coordinate Mg(2+). IMP contacts are provided by residues 13 to 16, 38 to 41, T129, R143, Q223, T238, and R302; these read DEGK and NAGH. Residue H41 is the Proton donor of the active site. Position 298–304 (298–304) interacts with substrate; sequence VVTGRKR. GTP is bound by residues R304, 330 to 332, and 412 to 414; these read KLD and STS.

This sequence belongs to the adenylosuccinate synthetase family. As to quaternary structure, homodimer. Mg(2+) is required as a cofactor.

It localises to the cytoplasm. The catalysed reaction is IMP + L-aspartate + GTP = N(6)-(1,2-dicarboxyethyl)-AMP + GDP + phosphate + 2 H(+). The protein operates within purine metabolism; AMP biosynthesis via de novo pathway; AMP from IMP: step 1/2. Plays an important role in the de novo pathway of purine nucleotide biosynthesis. Catalyzes the first committed step in the biosynthesis of AMP from IMP. The polypeptide is Adenylosuccinate synthetase (Bartonella bacilliformis (strain ATCC 35685 / KC583 / Herrer 020/F12,63)).